Here is a 341-residue protein sequence, read N- to C-terminus: Methionine import ATP-binding protein MetN (341 aa).

One can recognise an ABC transporter domain in the interval 2–237; that stretch reads IELCGLKKSF…PESLARKMLY (236 aa). Position 34–41 (34–41) interacts with ATP; sequence GKSGAGKS.

It belongs to the ABC transporter superfamily. Methionine importer (TC 3.A.1.24) family. In terms of assembly, the complex is composed of two ATP-binding proteins (MetN), two transmembrane proteins (MetI) and a solute-binding protein (MetQ).

Its subcellular location is the cell inner membrane. The enzyme catalyses L-methionine(out) + ATP + H2O = L-methionine(in) + ADP + phosphate + H(+). It carries out the reaction D-methionine(out) + ATP + H2O = D-methionine(in) + ADP + phosphate + H(+). Functionally, part of the ABC transporter complex MetNIQ involved in methionine import. Responsible for energy coupling to the transport system. The polypeptide is Methionine import ATP-binding protein MetN (Legionella pneumophila (strain Lens)).